Reading from the N-terminus, the 150-residue chain is Nucleoside diphosphate kinase (150 aa).

ATP contacts are provided by K10, F58, R86, T92, R103, and N113. The active-site Pros-phosphohistidine intermediate is H116.

It belongs to the NDK family. Homohexamer. It depends on Mg(2+) as a cofactor.

It carries out the reaction a 2'-deoxyribonucleoside 5'-diphosphate + ATP = a 2'-deoxyribonucleoside 5'-triphosphate + ADP. The enzyme catalyses a ribonucleoside 5'-diphosphate + ATP = a ribonucleoside 5'-triphosphate + ADP. In terms of biological role, major role in the synthesis of nucleoside triphosphates other than ATP. The ATP gamma phosphate is transferred to the NDP beta phosphate via a ping-pong mechanism, using a phosphorylated active-site intermediate. This chain is Nucleoside diphosphate kinase (awd), found in Drosophila yakuba (Fruit fly).